The sequence spans 870 residues: Elastin (870 aa).

An N-terminal signal peptide occupies residues Met1–Pro27. Pro39 and Pro75 each carry 4-hydroxyproline. A Hydroxyproline modification is found at Pro87. Pro105 carries the 4-hydroxyproline modification. 2 positions are modified to allysine: Lys122 and Lys126. Residues Pro207, Pro220, Pro223, and Pro244 each carry the 4-hydroxyproline modification. Allysine is present on residues Lys290 and Lys309. At Pro338 the chain carries 4-hydroxyproline. An allysine mark is found at Lys360 and Lys363. Residue Pro375 is modified to Hydroxyproline. Residues Pro402 and Pro408 each carry the 4-hydroxyproline modification. 2 positions are modified to hydroxyproline: Pro413 and Pro418. An allysine mark is found at Lys434, Lys438, Lys441, Lys485, and Lys488. Residues Pro518 and Pro539 each carry the 4-hydroxyproline modification. Allysine is present on residues Lys554, Lys558, Lys615, Lys619, and Lys623. 4-hydroxyproline occurs at positions 637, 646, 662, and 670. Residues Lys677 and Lys680 each carry the allysine modification. Pro715 is modified (4-hydroxyproline). 4 positions are modified to allysine: Lys730, Lys734, Lys793, and Lys796. Pro842 bears the 4-hydroxyproline mark. Cys860 and Cys865 are oxidised to a cystine.

It belongs to the elastin family. In terms of assembly, the polymeric elastin chains are cross-linked together into an extensible 3D network. Forms a ternary complex with BGN and MFAP2. Interacts with MFAP2 via divalent cations (calcium &gt; magnesium &gt; manganese) in a dose-dependent and saturating manner. Interacts with FBLN5 and FBN1. Forms a ternary complex with FBN1 and FBLN2 or FBLN5. Interacts with MFAP4 in a Ca (2+)-dependent manner; this interaction promotes ELN self-assembly. Interacts with EFEMP2 with moderate affinity. Elastin is formed through the cross-linking of its soluble precursor tropoelastin. Cross-linking is initiated through the action of lysyl oxidase on exposed lysines to form allysine. Subsequent spontaneous condensation reactions with other allysine or unmodified lysine residues result in various bi-, tri-, and tetrafunctional cross-links. The most abundant cross-links in mature elastin fibers are lysinonorleucine, allysine aldol, desmosine, and isodesmosine. Post-translationally, hydroxylation on proline residues within the sequence motif, GXPG, is most likely to be 4-hydroxy as this fits the requirement for 4-hydroxylation in vertebrates.

Its subcellular location is the secreted. The protein localises to the extracellular space. It localises to the extracellular matrix. Its function is as follows. Major structural protein of tissues such as aorta and nuchal ligament, which must expand rapidly and recover completely. Molecular determinant of the late arterial morphogenesis, stabilizing arterial structure by regulating proliferation and organization of vascular smooth muscle. The protein is Elastin (Eln) of Rattus norvegicus (Rat).